The primary structure comprises 250 residues: Ubiquinone/menaquinone biosynthesis C-methyltransferase UbiE (250 aa).

S-adenosyl-L-methionine is bound by residues threonine 73, aspartate 94, and 122 to 123 (DA).

The protein belongs to the class I-like SAM-binding methyltransferase superfamily. MenG/UbiE family.

It catalyses the reaction a 2-demethylmenaquinol + S-adenosyl-L-methionine = a menaquinol + S-adenosyl-L-homocysteine + H(+). It carries out the reaction a 2-methoxy-6-(all-trans-polyprenyl)benzene-1,4-diol + S-adenosyl-L-methionine = a 5-methoxy-2-methyl-3-(all-trans-polyprenyl)benzene-1,4-diol + S-adenosyl-L-homocysteine + H(+). The protein operates within quinol/quinone metabolism; menaquinone biosynthesis; menaquinol from 1,4-dihydroxy-2-naphthoate: step 2/2. Its pathway is cofactor biosynthesis; ubiquinone biosynthesis. Its function is as follows. Methyltransferase required for the conversion of demethylmenaquinol (DMKH2) to menaquinol (MKH2) and the conversion of 2-polyprenyl-6-methoxy-1,4-benzoquinol (DDMQH2) to 2-polyprenyl-3-methyl-6-methoxy-1,4-benzoquinol (DMQH2). The chain is Ubiquinone/menaquinone biosynthesis C-methyltransferase UbiE from Coxiella burnetii (strain RSA 493 / Nine Mile phase I).